The following is a 734-amino-acid chain: MVRFKQTSEVLKIMRNIEQIRNIGITAHVDHGKTTLSDSLLSAAGLLSEKIAGQALALDYLDVEQKRQMTVKAANASLYHEYKGKPYLINLIDTPGHVDFQSKTIRALRVIDGAIVVVDAVEGVMTQTEMYLRVALEERVRPVLFINKIDRLIKELRSPNEIQQRLVQIVKDVNTLIATYADKEFQKAWLLDPMKGQAFGSARDRWGLTIPLVQQKGIKFSDIVDVYTKGKEAVAELQKAAPLHEAILDMVVKYVPNPRDAQRYRIPKIWHGDLNHEAVKYMMEADPNGPLVMLVNDIRVDPHAGLVATGRIYSGTLRAGEEVWLVNARVPQRVLQVSLYMGPYRELADEITAGNIAAALALEKARSGETVVAMKYKDSMTPFEKLRMITESVVTVAIEPKNPQQLTKLVDALYKLHLEDPSLIVKINEETGEYLLSGVGTLHIEIALTLLKDLYGLEVVASPPVIVYRETVRESSQVFEGKSPNKHNKFYISVAPLNEETLRLMSEGIIVEDMDARERAKILREQAGWDADEARRIMAIDENLNMLVDMTTGVQYLREIKDTVIQGFRLAMKEGPLAMEPVRGVKVVLHDAVVHEDPAHRGPAQIFPAVRNAIFAGFLTAKPTILEPILKLDIRTPMEYIGNISTVITKKRGKLIEVQQMETSARVIAEIPVSESFDIADMLRNVTAGKAIWGQEFSRWAPVPESMLMDLVSKIRTRKGLKPEPPKLEDFLSP.

Residues Glu18–Arg259 enclose the tr-type G domain. GTP contacts are provided by residues Ala27–Thr34, Asp93–His97, and Asn147–Asp150. At His600 the chain carries Diphthamide.

Belongs to the TRAFAC class translation factor GTPase superfamily. Classic translation factor GTPase family. EF-G/EF-2 subfamily.

The protein localises to the cytoplasm. In terms of biological role, catalyzes the GTP-dependent ribosomal translocation step during translation elongation. During this step, the ribosome changes from the pre-translocational (PRE) to the post-translocational (POST) state as the newly formed A-site-bound peptidyl-tRNA and P-site-bound deacylated tRNA move to the P and E sites, respectively. Catalyzes the coordinated movement of the two tRNA molecules, the mRNA and conformational changes in the ribosome. The chain is Elongation factor 2 (fusA) from Desulfurococcus mucosus (Desulfurococcus mobilis).